Consider the following 372-residue polypeptide: N-methyl-L-tryptophan oxidase (372 aa).

Position 4–34 (4–34 (DLIIIGSGSVGAAAGYYATRAGLNVLMTDAH)) interacts with FAD. At C308 the chain carries S-8alpha-FAD cysteine.

The protein belongs to the MSOX/MTOX family. MTOX subfamily. In terms of assembly, monomer. Requires FAD as cofactor.

The catalysed reaction is N(alpha)-methyl-L-tryptophan + O2 + H2O = L-tryptophan + formaldehyde + H2O2. In terms of biological role, catalyzes the oxidative demethylation of N-methyl-L-tryptophan. This Shigella dysenteriae serotype 1 (strain Sd197) protein is N-methyl-L-tryptophan oxidase.